We begin with the raw amino-acid sequence, 300 residues long: Ribosomal protein L11 methyltransferase (300 aa).

Threonine 152, glycine 173, aspartate 195, and asparagine 234 together coordinate S-adenosyl-L-methionine.

Belongs to the methyltransferase superfamily. PrmA family.

The protein resides in the cytoplasm. It carries out the reaction L-lysyl-[protein] + 3 S-adenosyl-L-methionine = N(6),N(6),N(6)-trimethyl-L-lysyl-[protein] + 3 S-adenosyl-L-homocysteine + 3 H(+). Its function is as follows. Methylates ribosomal protein L11. The sequence is that of Ribosomal protein L11 methyltransferase from Paraburkholderia phytofirmans (strain DSM 17436 / LMG 22146 / PsJN) (Burkholderia phytofirmans).